The sequence spans 172 residues: Large ribosomal subunit protein uL10 (172 aa).

The protein belongs to the universal ribosomal protein uL10 family. Part of the ribosomal stalk of the 50S ribosomal subunit. The N-terminus interacts with L11 and the large rRNA to form the base of the stalk. The C-terminus forms an elongated spine to which L12 dimers bind in a sequential fashion forming a multimeric L10(L12)X complex.

In terms of biological role, forms part of the ribosomal stalk, playing a central role in the interaction of the ribosome with GTP-bound translation factors. The protein is Large ribosomal subunit protein uL10 of Idiomarina loihiensis (strain ATCC BAA-735 / DSM 15497 / L2-TR).